A 295-amino-acid chain; its full sequence is 33 kDa chaperonin (295 aa).

Intrachain disulfides connect C236-C238 and C269-C272.

The protein belongs to the HSP33 family. In terms of processing, under oxidizing conditions two disulfide bonds are formed involving the reactive cysteines. Under reducing conditions zinc is bound to the reactive cysteines and the protein is inactive.

The protein localises to the cytoplasm. Its function is as follows. Redox regulated molecular chaperone. Protects both thermally unfolding and oxidatively damaged proteins from irreversible aggregation. Plays an important role in the bacterial defense system toward oxidative stress. This is 33 kDa chaperonin from Citrifermentans bemidjiense (strain ATCC BAA-1014 / DSM 16622 / JCM 12645 / Bem) (Geobacter bemidjiensis).